The following is a 444-amino-acid chain: Exodeoxyribonuclease 7 large subunit (444 aa).

Belongs to the XseA family. In terms of assembly, heterooligomer composed of large and small subunits.

It localises to the cytoplasm. The enzyme catalyses Exonucleolytic cleavage in either 5'- to 3'- or 3'- to 5'-direction to yield nucleoside 5'-phosphates.. In terms of biological role, bidirectionally degrades single-stranded DNA into large acid-insoluble oligonucleotides, which are then degraded further into small acid-soluble oligonucleotides. The protein is Exodeoxyribonuclease 7 large subunit of Hahella chejuensis (strain KCTC 2396).